The chain runs to 307 residues: Elongation factor Ts (307 aa).

The tract at residues 80 to 83 is involved in Mg(2+) ion dislocation from EF-Tu; that stretch reads TDFV.

It belongs to the EF-Ts family.

The protein resides in the cytoplasm. In terms of biological role, associates with the EF-Tu.GDP complex and induces the exchange of GDP to GTP. It remains bound to the aminoacyl-tRNA.EF-Tu.GTP complex up to the GTP hydrolysis stage on the ribosome. The chain is Elongation factor Ts from Rhodopseudomonas palustris (strain BisA53).